Consider the following 1887-residue polypeptide: Protein TIC 214 (1887 aa).

6 helical membrane-spanning segments follow: residues 18–38 (IINS…FSIG), 64–84 (FITG…HLAL), 87–107 (PHTI…WNNH), 124–144 (LSIQ…HFIL), 172–192 (VGWL…LVWI), and 221–241 (IFSI…PSPI). 3 disordered regions span residues 248–300 (EASK…EGWD), 785–805 (REEQ…DNKR), and 1569–1603 (LPSN…NLSP). A compositionally biased stretch (acidic residues) spans 256-268 (VESEEERDVEIET). The segment covering 1578–1597 (RSQETKEPPSQRERGSDIEN) has biased composition (basic and acidic residues).

It belongs to the TIC214 family. Part of the Tic complex.

The protein resides in the plastid. It localises to the chloroplast inner membrane. Functionally, involved in protein precursor import into chloroplasts. May be part of an intermediate translocation complex acting as a protein-conducting channel at the inner envelope. This chain is Protein TIC 214, found in Solanum tuberosum (Potato).